Reading from the N-terminus, the 296-residue chain is Phosphatidylglycerol--prolipoprotein diacylglyceryl transferase (296 aa).

4 consecutive transmembrane segments (helical) span residues 10–30, 57–77, 92–112, and 119–139; these read IAFSLGPVQVHWYGLMYLAAF, LLFYGMLGVVLGGRIGYMLFY, VWEGGMSFHGGLLGVLIACWL, and LHFFDVMDFVAPLVPLGLGFG. Arg140 is an a 1,2-diacyl-sn-glycero-3-phospho-(1'-sn-glycerol) binding site. The next 3 membrane-spanning stretches (helical) occupy residues 194–214, 220–240, and 254–274; these read QLYEAALEGVVMFVVLWTFSM, YAVSGLFALLYGVFRFIVEFV, and WLTMGQILSLPLIAVGLVLLA.

Belongs to the Lgt family.

It is found in the cell inner membrane. It catalyses the reaction L-cysteinyl-[prolipoprotein] + a 1,2-diacyl-sn-glycero-3-phospho-(1'-sn-glycerol) = an S-1,2-diacyl-sn-glyceryl-L-cysteinyl-[prolipoprotein] + sn-glycerol 1-phosphate + H(+). Its pathway is protein modification; lipoprotein biosynthesis (diacylglyceryl transfer). Its function is as follows. Catalyzes the transfer of the diacylglyceryl group from phosphatidylglycerol to the sulfhydryl group of the N-terminal cysteine of a prolipoprotein, the first step in the formation of mature lipoproteins. This Xanthomonas euvesicatoria pv. vesicatoria (strain 85-10) (Xanthomonas campestris pv. vesicatoria) protein is Phosphatidylglycerol--prolipoprotein diacylglyceryl transferase.